Here is a 207-residue protein sequence, read N- to C-terminus: Large ribosomal subunit protein uL3c (207 aa).

Residues 115-151 (IGKGFAGNQKRHNFSRGPMTHGSKNHRLPGSIGAGST) are disordered.

Belongs to the universal ribosomal protein uL3 family. Part of the 50S ribosomal subunit.

Its subcellular location is the plastid. The protein localises to the chloroplast. Functionally, one of the primary rRNA binding proteins, it binds directly near the 3'-end of the 23S rRNA, where it nucleates assembly of the 50S subunit. The polypeptide is Large ribosomal subunit protein uL3c (rpl3) (Emiliania huxleyi (Coccolithophore)).